The chain runs to 201 residues: MGNVDLAKLGAILVKNAITGETVEFQTLWKDNTSVIFFLRRFGCQICRWIAKDVSQLKESLDANQIRLIGIGPETVGLQEFLDGKYFTGELYLDESKQSYKELGFKRYNALSIVPAALGKKVRDIVTKANADGVQGNFSGDLLQSGGMLVVSKGGEKALLHFVQDSPGDFVPLDTLVTALGITADVTSSQRPECNDEVCTR.

It belongs to the peroxiredoxin-like PRXL2 family. Prostamide/prostaglandin F synthase subfamily.

It localises to the cytoplasm. The protein resides in the cytosol. It catalyses the reaction prostaglandin H2 + [thioredoxin]-dithiol = prostaglandin F2alpha + [thioredoxin]-disulfide. The catalysed reaction is prostamide F2alpha + [thioredoxin]-disulfide = prostamide H2 + [thioredoxin]-dithiol. Functionally, catalyzes the reduction of prostaglandin-ethanolamide H(2) (prostamide H(2)) to prostamide F(2alpha) with NADPH as proton donor. Also able to reduce prostaglandin H(2) to prostaglandin F(2alpha). The polypeptide is Prostamide/prostaglandin F synthase (prxl2b) (Aquarana catesbeiana (American bullfrog)).